The chain runs to 160 residues: Transcriptional repressor NrdR (160 aa).

A zinc finger lies at 3 to 34 (CPFCGAEDTSVVDSRVSEEGSRIRRRRQCTAC). In terms of domain architecture, ATP-cone spans 49–139 (PQIIKQGGNR…VYRSFEDVGD (91 aa)).

The protein belongs to the NrdR family. Zn(2+) serves as cofactor.

In terms of biological role, negatively regulates transcription of bacterial ribonucleotide reductase nrd genes and operons by binding to NrdR-boxes. This is Transcriptional repressor NrdR from Nitrosomonas eutropha (strain DSM 101675 / C91 / Nm57).